The sequence spans 912 residues: GPMGIMGPRGPPGASGAPGPQGFQGPAGEPGEPGQTGPAGARAGEDGHPGKPGRPGERGVVGPQGARGFPGTPGIPGFKGHNGIDGIKGQPGAPGVKGEPGAPGENGTPGQAGARGIPGERGRVGAPGPAGARGSDGSVGPVGPAGPIGSAGPPGFPGAPGPKGEIGPVGNPGPAGPAGPRGEVGIPGISGPVGPPGNPGANGITGAKGAAGIPGVAGAPGIPGPRGIPGPAGAAGATGARGIVGEPGPAGSKGESGNKGEPGAAGPQGPPGPSGEEGKRGPNGEPGSTGPAGPPGIRGIPGADGRAGVMGPAGSRGASGPAGVRGPNGDSGRPGEPGIMGPRGFPGSPGNIGPAGKEGPVGIPGIDGRPGPIGPAGARGEPGNIGFPGPKGPSGEPGKPGDKGDAGIAGARGAPGPDGNNGAQGPPGPQGVQGGKGEQGPAGPPGFQGIPGPAGTAGEVGKPGERGIPGEFGIPGPAGARGPPGESGAAGPAGPIGSRGPSGPPGPDGNKGEPGVIGAPGTAGPSGPSGIPGERGAAGIPGGKGEIGNPGRDGARGAPGAVGAPGPAGANGDRGEAGAAGPAGPAGPRGEVGPAGPNGFAGPAGAAGQPGAKGERGPKGENGPVGPTGPVGAAGPSGPNGPPGPAGSRGDGGPPGVTGFPGAAGRTGPPGPSGISGPPGPPGAAGKGDQGPVGRAGETGASGPPGFAGEKGPSGEPGTAGPPGTPGPQGIIGAPGIIGIPGSRGIPGVAGSIGEPGPIGIAGPPGARGPPGAVGAPGVNGAPGEAGRDGNPGSDGPPGRGYPGNAGPVGAVGAPGPHGPVGPTGKRGEPGPVGSVGPVGAVGPRGPSGPQGVRGHNGIQGIPGIAGQHGDQGAPGSVGPAGPRGPAGPTGPVGKDSGQPGTVGPAGVRGSQ.

A compositionally biased stretch (low complexity) spans 1–41; sequence GPMGIMGPRGPPGASGAPGPQGFQGPAGEPGEPGQTGPAGA. Disordered regions lie at residues 1–206, 222–739, and 763–912; these read GPMG…GITG, IPGP…GIIG, and GPPG…RGSQ. The segment covering 43–57 has biased composition (basic and acidic residues); the sequence is AGEDGHPGKPGRPGE. Composition is skewed to low complexity over residues 124–153, 178–192, 229–244, 295–327, 360–382, and 406–424; these read VGAP…SAGP, AGPR…ISGP, PGPA…RGIV, PGIR…VRGP, PVGI…RGEP, and AGIA…NGAQ. The segment covering 431–440 has biased composition (gly residues); sequence GVQGGKGEQG. Low complexity-rich tracts occupy residues 474-501 and 517-532; these read IPGP…SRGP and IGAP…SGIP. Over residues 539–548 the composition is skewed to gly residues; sequence GIPGGKGEIG. Low complexity-rich tracts occupy residues 549–612 and 622–637; these read NPGR…QPGA and NGPV…AGPS. Residues 647–656 show a composition bias toward gly residues; that stretch reads GSRGDGGPPG. 5 stretches are compositionally biased toward low complexity: residues 658–667, 728–739, 763–785, 805–815, and 830–850; these read TGFPGAAGRT, PQGIIGAPGIIG, GPPG…APGE, NAGPVGAVGAP, and PGPV…PSGP.

This sequence belongs to the fibrillar collagen family. Trimers of one alpha 2(I) and two alpha 1(I) chains. Interacts (via C-terminus) with TMEM131 (via PapD-L domain); the interaction is direct and is involved in assembly and TRAPPIII ER-to-Golgi transport complex-dependent secretion of collagen. Post-translationally, prolines at the third position of the tripeptide repeating unit (G-X-Y) are hydroxylated in some or all of the chains. In terms of tissue distribution, forms the fibrils of tendon, ligaments and bones. In bones, the fibrils are mineralized with calcium hydroxyapatite.

Its subcellular location is the secreted. The protein resides in the extracellular space. It is found in the extracellular matrix. In terms of biological role, type I collagen is a member of group I collagen (fibrillar forming collagen). This is Collagen alpha-2(I) chain from Equus sp.